A 298-amino-acid polypeptide reads, in one-letter code: N-acetylmuramic acid 6-phosphate etherase (298 aa).

The region spanning 54-217 (TIKAMKQGGR…STTVMIGLGK (164 aa)) is the SIS domain. The active-site Proton donor is the Glu82. Residue Glu113 is part of the active site.

Belongs to the GCKR-like family. MurNAc-6-P etherase subfamily. As to quaternary structure, homodimer.

It catalyses the reaction N-acetyl-D-muramate 6-phosphate + H2O = N-acetyl-D-glucosamine 6-phosphate + (R)-lactate. It functions in the pathway amino-sugar metabolism; N-acetylmuramate degradation. Its function is as follows. Specifically catalyzes the cleavage of the D-lactyl ether substituent of MurNAc 6-phosphate, producing GlcNAc 6-phosphate and D-lactate. The chain is N-acetylmuramic acid 6-phosphate etherase from Halalkalibacterium halodurans (strain ATCC BAA-125 / DSM 18197 / FERM 7344 / JCM 9153 / C-125) (Bacillus halodurans).